A 266-amino-acid chain; its full sequence is Imidazole glycerol phosphate synthase subunit HisF (266 aa).

Catalysis depends on residues Asp-11 and Asp-130.

This sequence belongs to the HisA/HisF family. Heterodimer of HisH and HisF.

It localises to the cytoplasm. It carries out the reaction 5-[(5-phospho-1-deoxy-D-ribulos-1-ylimino)methylamino]-1-(5-phospho-beta-D-ribosyl)imidazole-4-carboxamide + L-glutamine = D-erythro-1-(imidazol-4-yl)glycerol 3-phosphate + 5-amino-1-(5-phospho-beta-D-ribosyl)imidazole-4-carboxamide + L-glutamate + H(+). It participates in amino-acid biosynthesis; L-histidine biosynthesis; L-histidine from 5-phospho-alpha-D-ribose 1-diphosphate: step 5/9. Functionally, IGPS catalyzes the conversion of PRFAR and glutamine to IGP, AICAR and glutamate. The HisF subunit catalyzes the cyclization activity that produces IGP and AICAR from PRFAR using the ammonia provided by the HisH subunit. This Nitrosopumilus maritimus (strain SCM1) protein is Imidazole glycerol phosphate synthase subunit HisF.